The following is a 483-amino-acid chain: Membrane-bound lytic murein transglycosylase F (483 aa).

The signal sequence occupies residues 1–18 (MKGLIARFIAGFALLLWA). The tract at residues 19 to 267 (WDMVFPWQQL…RIEEKYFNHL (249 aa)) is non-LT domain. Residues 269-483 (HFDYVDIQSY…SKESDSTLKE (215 aa)) are LT domain. Residue Glu312 is part of the active site. Residues 458-483 (QQIQNNEEQPSVPQEISKESDSTLKE) are disordered. Positions 473-483 (ISKESDSTLKE) are enriched in basic and acidic residues.

In the N-terminal section; belongs to the bacterial solute-binding protein 3 family. The protein in the C-terminal section; belongs to the transglycosylase Slt family.

The protein resides in the cell outer membrane. The enzyme catalyses Exolytic cleavage of the (1-&gt;4)-beta-glycosidic linkage between N-acetylmuramic acid (MurNAc) and N-acetylglucosamine (GlcNAc) residues in peptidoglycan, from either the reducing or the non-reducing ends of the peptidoglycan chains, with concomitant formation of a 1,6-anhydrobond in the MurNAc residue.. Murein-degrading enzyme that degrades murein glycan strands and insoluble, high-molecular weight murein sacculi, with the concomitant formation of a 1,6-anhydromuramoyl product. Lytic transglycosylases (LTs) play an integral role in the metabolism of the peptidoglycan (PG) sacculus. Their lytic action creates space within the PG sacculus to allow for its expansion as well as for the insertion of various structures such as secretion systems and flagella. This is Membrane-bound lytic murein transglycosylase F from Actinobacillus pleuropneumoniae serotype 3 (strain JL03).